Here is a 241-residue protein sequence, read N- to C-terminus: Synaptogyrin (241 aa).

In terms of domain architecture, MARVEL spans 30–179 (FAMKPQVVIR…CALMAYKRFL (150 aa)). 4 helical membrane passes run 34–54 (PQVV…GCIS), 81–101 (MVGV…FLFE), 115–135 (ADMG…LYLW), and 155–175 (TAIW…LMAY). The segment at 216–241 (ASPFGQPQQGGMEQQQSGMEYQQPTY) is disordered. Positions 220–241 (GQPQQGGMEQQQSGMEYQQPTY) are enriched in low complexity.

Belongs to the synaptogyrin family.

It localises to the cytoplasmic vesicle membrane. Its subcellular location is the cytoplasmic vesicle. The protein resides in the secretory vesicle membrane. The protein localises to the secretory vesicle. It is found in the synaptic vesicle membrane. In terms of biological role, required for the correct formation of synaptic vesicles at nerve terminals and has a role in the regulation of the synaptic vesicle exo-endocytic cycle. In Drosophila melanogaster (Fruit fly), this protein is Synaptogyrin.